A 360-amino-acid polypeptide reads, in one-letter code: Phospho-N-acetylmuramoyl-pentapeptide-transferase (360 aa).

10 consecutive transmembrane segments (helical) span residues 16–36 (FAVFQYLTLRGILGVLTALVL), 73–93 (TMGGALILSSIGVSTLLWADL), 97–117 (YVWVVLLVTLLFGAIGWVDDY), 134–154 (YFWQSVFGLGAAIFLYMTAST), 168–188 (YSIPLGAGFIVLTYFVIVGSS), 199–219 (GLAIMPTVMVGGGLGIFCYLS), 236–256 (AGELIVFCGALIGAGLGFLWF), 263–283 (VFMGDVGALALGAALGTIAVI), 288–308 (IVLFIMGGVFVMETLSVVIQV), and 338–358 (VIVRFWIITVILVLIGLATLK).

The protein belongs to the glycosyltransferase 4 family. MraY subfamily. Mg(2+) is required as a cofactor.

It is found in the cell inner membrane. It carries out the reaction UDP-N-acetyl-alpha-D-muramoyl-L-alanyl-gamma-D-glutamyl-meso-2,6-diaminopimeloyl-D-alanyl-D-alanine + di-trans,octa-cis-undecaprenyl phosphate = di-trans,octa-cis-undecaprenyl diphospho-N-acetyl-alpha-D-muramoyl-L-alanyl-D-glutamyl-meso-2,6-diaminopimeloyl-D-alanyl-D-alanine + UMP. Its pathway is cell wall biogenesis; peptidoglycan biosynthesis. Catalyzes the initial step of the lipid cycle reactions in the biosynthesis of the cell wall peptidoglycan: transfers peptidoglycan precursor phospho-MurNAc-pentapeptide from UDP-MurNAc-pentapeptide onto the lipid carrier undecaprenyl phosphate, yielding undecaprenyl-pyrophosphoryl-MurNAc-pentapeptide, known as lipid I. This is Phospho-N-acetylmuramoyl-pentapeptide-transferase from Pseudomonas fluorescens (strain Pf0-1).